The sequence spans 631 residues: Arginine--tRNA ligase (631 aa).

The 'HIGH' region signature appears at 132–142 (PNIAKPLHVGH).

The protein belongs to the class-I aminoacyl-tRNA synthetase family.

Its subcellular location is the cytoplasm. The enzyme catalyses tRNA(Arg) + L-arginine + ATP = L-arginyl-tRNA(Arg) + AMP + diphosphate. In Halobacterium salinarum (strain ATCC 700922 / JCM 11081 / NRC-1) (Halobacterium halobium), this protein is Arginine--tRNA ligase.